The sequence spans 430 residues: Transcription factor E2F1 (430 aa).

Positions 62–103 (ATPQAPRPAPSAPRPALGRPPVKRRLDLETDHQYLAGSSGPF) are cyclin A:CDK2 binding. Residues 84-186 (KRRLDLETDH…KKSKNHIQWL (103 aa)) are interaction with BIRC2/c-IAP1. The interval 95–123 (YLAGSSGPFRGRGRHPGKGVKSPGEKSRY) is disordered. The DNA-binding element occupies 105–189 (GRGRHPGKGV…KNHIQWLGSH (85 aa)). Residues K112, K115, and K120 each carry the N6-acetyllysine modification. The leucine-zipper stretch occupies residues 148-169 (LNWAAEVLKVQKRRIYDITNVL). Residues 153 to 189 (EVLKVQKRRIYDITNVLEGIQLIAKKSKNHIQWLGSH) carry the DEF box motif. K180 carries the N6-methyllysine; by SETD7 modification. A required for interaction with TRIM28 region spans residues 187–375 (GSHTMVGIGK…QLSPLVAADS (189 aa)). A dimerization region spans residues 190–279 (TMVGIGKRLE…AVDSSETFQI (90 aa)). Positions 294–340 (PEESADGISPGKTSCQETSSGEDRTADSGPAGPPPSPPSTSPALDPS) are disordered. Residues 324–333 (AGPPPSPPST) show a composition bias toward pro residues. Residues 361–430 (PMEEDQLSPL…DFGDLTPLDF (70 aa)) are transactivation. Phosphoserine is present on residues S368 and S396. The tract at residues 402–419 (LDYHFGLEEGEGIRDLFD) is RB1 binding. T426 carries the phosphothreonine modification.

It belongs to the E2F/DP family. As to quaternary structure, component of the DRTF1/E2F transcription factor complex. Forms heterodimers with DP family members. The E2F1 complex binds specifically hypophosphorylated RB1, the interaction represses E2F1-driven transcription. During the cell cycle, RB1 becomes phosphorylated in mid-to-late G1 phase, detaches from the DRTF1/E2F complex, rendering E2F transcriptionally active. Interacts with TRRAP, which probably mediates its interaction with histone acetyltransferase complexes, leading to transcription activation. Binds TOPBP1 and EAPP. Interacts with ARID3A. Interacts with TRIM28; the interaction inhibits E2F1 acetylation through recruiting HDAC1 and represses its transcriptional activity. Interaction with KAT2B; the interaction acetylates E2F1 enhancing its DNA-binding and transcriptional activity. Interacts with BIRC2/c-IAP1 (via BIR domains). The complex TFDP1:E2F1 interacts with CEBPA; the interaction prevents CEBPA binding to target genes promoters and represses its transcriptional activity. Interacts with RRP1B. Interacts with HCFC1. Interacts with KMT2E; the interaction is probably indirect and is mediated via HCFC1. Interacts with DCAF5 and L3MBTL3; the interaction requires methylation at Lys-180 and is necessary to target E2F1 for ubiquitination by the CRL4-DCAF5 E3 ubiquitin ligase complex. Post-translationally, phosphorylated by CDK2 and cyclin A-CDK2 in the S-phase. Phosphorylation by CHEK2 stabilizes E2F1 upon DNA damage and regulates its effect on transcription and apoptosis. Phosphorylation at Ser-396 by GSK3B promotes interaction with USP11, leading to its deubiquitination and stabilization. In terms of processing, ubiquitinated via 'Lys-63'-linked ubiquitin, leading to its degradation. Deubiquitinated by USP11 following phosphorylation by GSK3B, promoting its stability. Acetylation stimulates DNA-binding. Enhanced under stress conditions such as DNA damage and inhibited by retinoblastoma protein RB1. Regulated by KAP1/TRIM28 which recruits HDAC1 to E2F1 resulting in deacetylation. Acetylated by P/CAF/KAT2B. Post-translationally, methylation at Lys-180 by SETD7 promotes E2F1 ubiquitin-dependent proteasomal degradation.

Its subcellular location is the nucleus. BIRC2/c-IAP1 stimulates its transcriptional activity. In terms of biological role, transcription activator that binds DNA cooperatively with DP proteins through the E2 recognition site, 5'-TTTC[CG]CGC-3' found in the promoter region of a number of genes whose products are involved in cell cycle regulation or in DNA replication. The DRTF1/E2F complex functions in the control of cell-cycle progression from G1 to S phase. E2F1 binds preferentially RB1 in a cell-cycle dependent manner. It can mediate both cell proliferation and TP53/p53-dependent apoptosis. Blocks adipocyte differentiation by binding to specific promoters repressing CEBPA binding to its target gene promoters. Directly activates transcription of PEG10. Positively regulates transcription of RRP1B. This Mus musculus (Mouse) protein is Transcription factor E2F1.